We begin with the raw amino-acid sequence, 316 residues long: DNA-directed RNA polymerase III subunit RPC6 (316 aa).

Residue A2 is modified to N-acetylalanine. Residues K5 and K7 each participate in a glycyl lysine isopeptide (Lys-Gly) (interchain with G-Cter in SUMO2) cross-link. Residues C287, C290, C296, and C307 each contribute to the [4Fe-4S] cluster site.

Belongs to the eukaryotic RPC34/RPC39 RNA polymerase subunit family. As to quaternary structure, component of the RNA polymerase III complex consisting of 17 subunits: a ten-subunit horseshoe-shaped catalytic core composed of POLR3A/RPC1, POLR3B/RPC2, POLR1C/RPAC1, POLR1D/RPAC2, POLR3K/RPC10, POLR2E/RPABC1, POLR2F/RPABC2, POLR2H/RPABC3, POLR2K/RPABC4 and POLR2L/RPABC5; a mobile stalk composed of two subunits POLR3H/RPC8 and CRCP/RPC9, protruding from the core and functioning primarily in transcription initiation; and additional subunits homologous to general transcription factors of the RNA polymerase II machinery, POLR3C/RPC3-POLR3F/RPC6-POLR3G/RPC7 heterotrimer required for transcription initiation and POLR3D/RPC4-POLR3E/RPC5 heterodimer involved in both transcription initiation and termination. Directly interacts with POLR3C. Interacts with TBP and TFIIIB90 and GTF3C4. Interacts with MAF1. As part of the RNA polymerase III complex, interacts with PKP2.

The protein localises to the nucleus. DNA-dependent RNA polymerase catalyzes the transcription of DNA into RNA using the four ribonucleoside triphosphates as substrates. Specific peripheric component of RNA polymerase III (Pol III) which synthesizes small non-coding RNAs including 5S rRNA, snRNAs, tRNAs and miRNAs from at least 500 distinct genomic loci. Part of POLR3C/RPC3-POLR3F/RPC6-POLR3G/RPC7 heterotrimer that coordinates the dynamics of Pol III stalk and clamp modules during the transition from apo to elongation state. Pol III plays a key role in sensing and limiting infection by intracellular bacteria and DNA viruses, including varicella zoster virus. Acts as a nuclear and cytosolic DNA sensor detecting AT-rich DNA, involved in innate immune response. Can sense non-self dsDNA that serves as template for transcription into dsRNA. The non-self RNA polymerase III transcripts, such as Epstein-Barr virus-encoded RNAs (EBERs) induce type I interferon and NF-kappa-B through the RIG-I pathway. Preferentially binds double-stranded DNA (dsDNA). The sequence is that of DNA-directed RNA polymerase III subunit RPC6 from Mus musculus (Mouse).